We begin with the raw amino-acid sequence, 316 residues long: Succinoglycan biosynthesis protein ExoV (316 aa).

Its pathway is glycan metabolism; exopolysaccharide biosynthesis. This chain is Succinoglycan biosynthesis protein ExoV (exoV), found in Rhizobium meliloti (strain 1021) (Ensifer meliloti).